Consider the following 428-residue polypeptide: Elongation factor 1-alpha (428 aa).

One can recognise a tr-type G domain in the interval 5–225; sequence KPILNVAFIG…DGFQPPEKPT (221 aa). The segment at 14–21 is G1; the sequence is GHVDAGKS. 14-21 contacts GTP; the sequence is GHVDAGKS. Position 21 (Ser21) interacts with Mg(2+). A G2 region spans residues 70–74; it reads GVTID. Positions 91–94 are G3; that stretch reads DCPG. GTP is bound by residues 91 to 95 and 149 to 152; these read DCPGH and NKMD. Residues 149–152 form a G4 region; the sequence is NKMD. Residues 189–191 are G5; the sequence is ASL.

It belongs to the TRAFAC class translation factor GTPase superfamily. Classic translation factor GTPase family. EF-Tu/EF-1A subfamily.

The protein localises to the cytoplasm. It carries out the reaction GTP + H2O = GDP + phosphate + H(+). Its function is as follows. GTP hydrolase that promotes the GTP-dependent binding of aminoacyl-tRNA to the A-site of ribosomes during protein biosynthesis. The sequence is that of Elongation factor 1-alpha from Methanococcus vannielii (strain ATCC 35089 / DSM 1224 / JCM 13029 / OCM 148 / SB).